The primary structure comprises 299 residues: uncharacterized protein (299 aa).

This is an uncharacterized protein from Mycobacterium tuberculosis (strain ATCC 25618 / H37Rv).